A 315-amino-acid polypeptide reads, in one-letter code: Probable HTH-type transcriptional regulator SinR (315 aa).

The region spanning 8–65 (RGMRDWMIFIKVAEVGNLSRAARELDISISAVSKSLSRLENSIEVTLLRRDSHHLELT) is the HTH lysR-type domain. The segment at residues 25 to 44 (LSRAARELDISISAVSKSLS) is a DNA-binding region (H-T-H motif).

It belongs to the LysR transcriptional regulatory family.

In terms of biological role, probable regulatory protein. Its target is not known. This Salmonella typhimurium (strain LT2 / SGSC1412 / ATCC 700720) protein is Probable HTH-type transcriptional regulator SinR (sinR).